Here is a 515-residue protein sequence, read N- to C-terminus: Maturase K (515 aa).

This sequence belongs to the intron maturase 2 family. MatK subfamily.

It is found in the plastid. It localises to the chloroplast. In terms of biological role, usually encoded in the trnK tRNA gene intron. Probably assists in splicing its own and other chloroplast group II introns. In Pinus tabuliformis (Chinese red pine), this protein is Maturase K.